Here is a 545-residue protein sequence, read N- to C-terminus: Indole-3-pyruvate decarboxylase (545 aa).

E48 serves as a coordination point for thiamine diphosphate. The thiamine pyrophosphate binding stretch occupies residues 382–460; sequence DCLFTAMDMI…VILFNNASWE (79 aa). Residues D429 and N456 each coordinate Mg(2+).

Belongs to the TPP enzyme family. A metal cation serves as cofactor. Requires thiamine diphosphate as cofactor.

It carries out the reaction indole-3-pyruvate + H(+) = indole-3-acetaldehyde + CO2. It participates in plant hormone metabolism; auxin biosynthesis. This Azospirillum brasilense protein is Indole-3-pyruvate decarboxylase (ipdC).